Consider the following 111-residue polypeptide: Short neuropeptide F (111 aa).

The first 24 residues, Met-1 to Ala-24, serve as a signal peptide directing secretion. The propeptide occupies Thr-25 to Gln-76. Phe-85 bears the Phenylalanine amide mark. A propeptide spanning residues Ser-88–Asn-111 is cleaved from the precursor.

Expressed throughout the central nervous system (at protein level).

Its subcellular location is the secreted. Functionally, plays a role in controlling food intake and regulating body size. The polypeptide is Short neuropeptide F (Camponotus floridanus (Florida carpenter ant)).